A 532-amino-acid polypeptide reads, in one-letter code: CTP synthase (532 aa).

Positions 1 to 267 are amidoligase domain; that stretch reads MAKFIFVTGG…QDIIIEQLQL (267 aa). Serine 13 lines the CTP pocket. Position 13 (serine 13) interacts with UTP. 14-19 serves as a coordination point for ATP; sequence GLGKGI. Tyrosine 54 contacts L-glutamine. Aspartate 71 contributes to the ATP binding site. Mg(2+) is bound by residues aspartate 71 and glutamate 141. CTP is bound by residues 148–150, 188–193, and lysine 224; these read DIE and KTKPIQ. Residues 188-193 and lysine 224 each bind UTP; that span reads KTKPIQ. The Glutamine amidotransferase type-1 domain maps to 292–532; sequence EISFVGKYIE…FIKAIIENNK (241 aa). Position 354 (glycine 354) interacts with L-glutamine. Cysteine 381 functions as the Nucleophile; for glutamine hydrolysis in the catalytic mechanism. L-glutamine contacts are provided by residues 382–385, glutamate 405, and arginine 461; that span reads LGMQ. Residues histidine 506 and glutamate 508 contribute to the active site.

The protein belongs to the CTP synthase family. In terms of assembly, homotetramer.

It catalyses the reaction UTP + L-glutamine + ATP + H2O = CTP + L-glutamate + ADP + phosphate + 2 H(+). The catalysed reaction is L-glutamine + H2O = L-glutamate + NH4(+). The enzyme catalyses UTP + NH4(+) + ATP = CTP + ADP + phosphate + 2 H(+). It functions in the pathway pyrimidine metabolism; CTP biosynthesis via de novo pathway; CTP from UDP: step 2/2. Allosterically activated by GTP, when glutamine is the substrate; GTP has no effect on the reaction when ammonia is the substrate. The allosteric effector GTP functions by stabilizing the protein conformation that binds the tetrahedral intermediate(s) formed during glutamine hydrolysis. Inhibited by the product CTP, via allosteric rather than competitive inhibition. Catalyzes the ATP-dependent amination of UTP to CTP with either L-glutamine or ammonia as the source of nitrogen. Regulates intracellular CTP levels through interactions with the four ribonucleotide triphosphates. This chain is CTP synthase, found in Mycoplasma capricolum subsp. capricolum (strain California kid / ATCC 27343 / NCTC 10154).